The sequence spans 369 residues: Deacetylase EF_0837 (369 aa).

Zn(2+) contacts are provided by histidine 58, histidine 60, lysine 152, histidine 186, histidine 209, and aspartate 270. At lysine 152 the chain carries N6-carboxylysine.

This sequence belongs to the metallo-dependent hydrolases superfamily. Atu3266/EF_0837 deacetylase family. Zn(2+) serves as cofactor.

Functionally, esterase that can catalyze the deacetylation of acetyl-(R)-mandelate, but with very low efficiency (in vitro). The protein is Deacetylase EF_0837 of Enterococcus faecalis (strain ATCC 700802 / V583).